Here is a 270-residue protein sequence, read N- to C-terminus: 5'-nucleotidase SurE (270 aa).

A divalent metal cation is bound by residues Asp8, Asp9, Ser40, and Asn98.

This sequence belongs to the SurE nucleotidase family. A divalent metal cation serves as cofactor.

Its subcellular location is the cytoplasm. The catalysed reaction is a ribonucleoside 5'-phosphate + H2O = a ribonucleoside + phosphate. Its function is as follows. Nucleotidase that shows phosphatase activity on nucleoside 5'-monophosphates. This chain is 5'-nucleotidase SurE, found in Cyanothece sp. (strain PCC 7425 / ATCC 29141).